Here is a 401-residue protein sequence, read N- to C-terminus: 1-deoxy-D-xylulose 5-phosphate reductoisomerase (401 aa).

T11, G12, S13, I14, R38, N39, and N125 together coordinate NADPH. K126 contacts 1-deoxy-D-xylulose 5-phosphate. Residue E127 coordinates NADPH. A Mn(2+)-binding site is contributed by D151. S152, E153, S179, and H202 together coordinate 1-deoxy-D-xylulose 5-phosphate. E153 serves as a coordination point for Mn(2+). G208 is a binding site for NADPH. Residues S215, N220, K221, and E224 each contribute to the 1-deoxy-D-xylulose 5-phosphate site. A Mn(2+)-binding site is contributed by E224.

This sequence belongs to the DXR family. The cofactor is Mg(2+). Mn(2+) is required as a cofactor.

The catalysed reaction is 2-C-methyl-D-erythritol 4-phosphate + NADP(+) = 1-deoxy-D-xylulose 5-phosphate + NADPH + H(+). It functions in the pathway isoprenoid biosynthesis; isopentenyl diphosphate biosynthesis via DXP pathway; isopentenyl diphosphate from 1-deoxy-D-xylulose 5-phosphate: step 1/6. Catalyzes the NADPH-dependent rearrangement and reduction of 1-deoxy-D-xylulose-5-phosphate (DXP) to 2-C-methyl-D-erythritol 4-phosphate (MEP). In Paraburkholderia phytofirmans (strain DSM 17436 / LMG 22146 / PsJN) (Burkholderia phytofirmans), this protein is 1-deoxy-D-xylulose 5-phosphate reductoisomerase.